The following is an 85-amino-acid chain: Conotoxin Mi15b (85 aa).

The signal sequence occupies residues 1 to 23 (MEKLTVLILVAIVLLTIQVLGQS). Positions 24-49 (DRDKHPKRRPRQYATKRLSALMKGHR) are excised as a propeptide. Gln50 is subject to Pyrrolidone carboxylic acid.

This sequence belongs to the conotoxin O2 superfamily. Post-translationally, contains 4 disulfide bonds. In terms of tissue distribution, expressed by the venom duct.

It localises to the secreted. The chain is Conotoxin Mi15b from Conus miles (Soldier cone).